The following is a 309-amino-acid chain: Probable manganese-dependent inorganic pyrophosphatase (309 aa).

Mn(2+)-binding residues include H9, D13, D15, D75, H97, and D149.

It belongs to the PPase class C family. Requires Mn(2+) as cofactor.

It is found in the cytoplasm. The enzyme catalyses diphosphate + H2O = 2 phosphate + H(+). This is Probable manganese-dependent inorganic pyrophosphatase from Exiguobacterium sp. (strain ATCC BAA-1283 / AT1b).